Reading from the N-terminus, the 215-residue chain is Cytochrome b6 (215 aa).

The helical transmembrane segment at 32–52 threads the bilayer; sequence IFYCLGGITLTCFLVQVATGF. Cysteine 35 provides a ligand contact to heme c. Heme b contacts are provided by histidine 86 and histidine 100. 3 consecutive transmembrane segments (helical) span residues 90 to 110, 116 to 136, and 186 to 206; these read ASMMVLMMILHIFRVYLTGGF, LTWVTGVILAVLTVSFGVTGY, and LHTFVLPLLTAIFMLMHFLMI. Histidine 187 and histidine 202 together coordinate heme b.

It belongs to the cytochrome b family. PetB subfamily. In terms of assembly, the 4 large subunits of the cytochrome b6-f complex are cytochrome b6, subunit IV (17 kDa polypeptide, PetD), cytochrome f and the Rieske protein, while the 4 small subunits are PetG, PetL, PetM and PetN. The complex functions as a dimer. It depends on heme b as a cofactor. Heme c serves as cofactor.

It localises to the plastid. Its subcellular location is the chloroplast thylakoid membrane. Functionally, component of the cytochrome b6-f complex, which mediates electron transfer between photosystem II (PSII) and photosystem I (PSI), cyclic electron flow around PSI, and state transitions. This Marchantia polymorpha (Common liverwort) protein is Cytochrome b6.